Here is a 519-residue protein sequence, read N- to C-terminus: 2,3-bisphosphoglycerate-independent phosphoglycerate mutase (519 aa).

Positions 9 and 60 each coordinate Mn(2+). The active-site Phosphoserine intermediate is the serine 60. Residues 76 to 91 (DSARVSDSIARSRGEA) show a composition bias toward basic and acidic residues. A disordered region spans residues 76–102 (DSARVSDSIARSRGEAPPDDDAQDPPF). Substrate-binding positions include histidine 134, 163-164 (RD), arginine 195, arginine 201, 267-270 (RSDR), and lysine 341. Aspartate 408, histidine 412, aspartate 449, histidine 450, and histidine 466 together coordinate Mn(2+).

The protein belongs to the BPG-independent phosphoglycerate mutase family. The cofactor is Mn(2+).

The enzyme catalyses (2R)-2-phosphoglycerate = (2R)-3-phosphoglycerate. Its pathway is carbohydrate degradation; glycolysis; pyruvate from D-glyceraldehyde 3-phosphate: step 3/5. Catalyzes the interconversion of 2-phosphoglycerate and 3-phosphoglycerate. The protein is 2,3-bisphosphoglycerate-independent phosphoglycerate mutase of Haloarcula marismortui (strain ATCC 43049 / DSM 3752 / JCM 8966 / VKM B-1809) (Halobacterium marismortui).